Here is a 400-residue protein sequence, read N- to C-terminus: TBC1 domain family member 13 (400 aa).

The region spanning 35 to 345 is the Rab-GAP TBC domain; it reads PCEGGLRCLC…RIWDSLFADD (311 aa).

Interacts with RAB1A and RAB10; in a GTP-dependent manner.

The protein resides in the membrane. It localises to the cytoplasm. Acts as a GTPase-activating protein for RAB35. Together with RAB35 may be involved in regulation of insulin-induced glucose transporter SLC2A4/GLUT4 translocation to the plasma membrane in adipocytes. The chain is TBC1 domain family member 13 (TBC1D13) from Homo sapiens (Human).